The primary structure comprises 107 residues: Guanylin (107 aa).

Positions 1–20 are cleaved as a signal peptide; that stretch reads MNTFLLSALCLGAWAALVGA. The propeptide occupies 21 to 92; sequence VTVQDGDFSF…LNRLAVIAQD (72 aa). Disulfide bonds link cysteine 61-cysteine 74, cysteine 96-cysteine 104, and cysteine 99-cysteine 107.

This sequence belongs to the guanylin family.

The protein localises to the secreted. Endogenous activator of intestinal guanylate cyclase. It stimulates this enzyme through the same receptor binding region as the heat-stable enterotoxins. The polypeptide is Guanylin (GUCA2A) (Cavia porcellus (Guinea pig)).